The following is a 235-amino-acid chain: Peptidyl-tRNA hydrolase (235 aa).

Tyrosine 14 is a binding site for tRNA. The active-site Proton acceptor is the histidine 19. Residues phenylalanine 64, asparagine 66, and asparagine 112 each contribute to the tRNA site. The interval 188–235 is disordered; the sequence is APARNSGTRPDNPGKGSPEKPAAKPANDPIAEPPSLSDRLRALTERFR. Over residues 225 to 235 the composition is skewed to basic and acidic residues; the sequence is DRLRALTERFR.

It belongs to the PTH family. As to quaternary structure, monomer.

Its subcellular location is the cytoplasm. It catalyses the reaction an N-acyl-L-alpha-aminoacyl-tRNA + H2O = an N-acyl-L-amino acid + a tRNA + H(+). In terms of biological role, hydrolyzes ribosome-free peptidyl-tRNAs (with 1 or more amino acids incorporated), which drop off the ribosome during protein synthesis, or as a result of ribosome stalling. Functionally, catalyzes the release of premature peptidyl moieties from peptidyl-tRNA molecules trapped in stalled 50S ribosomal subunits, and thus maintains levels of free tRNAs and 50S ribosomes. This chain is Peptidyl-tRNA hydrolase, found in Paracoccus denitrificans (strain Pd 1222).